The sequence spans 513 residues: Cytochrome P450 71D445 (513 aa).

The helical; Signal-anchor for type II membrane protein transmembrane segment at 12–28 threads the bilayer; it reads SEWAITSTITLLFLILL. Cys-450 is a binding site for heme.

Belongs to the cytochrome P450 family. The cofactor is heme. As to expression, expressed in mature seeds.

Its subcellular location is the membrane. The enzyme catalyses (-)-casbene + reduced [NADPH--hemoprotein reductase] + O2 = 8-hydroxycasbene + oxidized [NADPH--hemoprotein reductase] + H2O + H(+). It carries out the reaction 4-hydroxycasbene + reduced [NADPH--hemoprotein reductase] + O2 = 4,8-dihydroxycasbene + oxidized [NADPH--hemoprotein reductase] + H2O + H(+). It catalyses the reaction 4,8-dihydroxycasbene + reduced [NADPH--hemoprotein reductase] + O2 = 4,5,8-trihydroxycasbene + oxidized [NADPH--hemoprotein reductase] + H2O + H(+). The protein operates within secondary metabolite biosynthesis; terpenoid biosynthesis. Involved in the biosynthesis of macrocyclic lathyrane type diterpenoids (also called Euphorbia factors) natural products, including the cyclization route from casbene to jolkinol C, a precursor for ingenol mebutate that is used to treat actinic keratosis, a precancerous skin condition. Catalyzes the hydroxylation of (-)-casbene and 4-hydroxycasbene to produce 8-hydroxycasbene and 4,8-dihydroxycasbene, respectively. Also mediates the formation of 4-hydroxy-8-ketocasbene from 4,8-dihydroxycasbene. Together with ADH1, triggers the biosynthesis of 8-ketocasbene from 8-hydroxycasbene. The polypeptide is Cytochrome P450 71D445 (Euphorbia lathyris (Caper spurge)).